A 367-amino-acid polypeptide reads, in one-letter code: MKIGVFIPIGNNGWLISSNAPQYMPSFELNKAIVQQAEHYQFDFALSMIKLRGFGGKTEFWDHNLESFTLMAGLAAVTSRIKIYATAATLTLPPAIVARMASTIDSISNGRFGLNVVTGWQKPEYEQMGLWPGDEYFSRRYDYLSEYVEVLQDFWGTGQSDFNGEFFQMDDCRVSPQPQTPIKLICAAQSDAGMAFSAKYADYNFCFGKGVNTPTAFAPTAARLQKAAEQAGREVSSYVLFMIIADETDELARAKWESYKAGADTEALAWLTEQSGKDTQSGADTNVRQMADPTSAVNINMGTLVGSYANVAKMMDDIATVPGTEGILLTFDDFLSGIENFGQHIQPLMNSRADIVDTLPPAAREVA.

Residues 49–50 (IK), N115, E124, 140–141 (RY), and S190 each bind FMN.

This sequence belongs to the NtaA/SnaA/DszA monooxygenase family. RutA subfamily.

It carries out the reaction uracil + FMNH2 + NADH + O2 = (Z)-3-ureidoacrylate + FMN + NAD(+) + H2O + H(+). The enzyme catalyses thymine + FMNH2 + NADH + O2 = (Z)-2-methylureidoacrylate + FMN + NAD(+) + H2O + H(+). In terms of biological role, catalyzes the pyrimidine ring opening between N-3 and C-4 by an unusual flavin hydroperoxide-catalyzed mechanism, adding oxygen atoms in the process to yield ureidoacrylate peracid, that immediately reacts with FMN forming ureidoacrylate and FMN-N(5)-oxide. The FMN-N(5)-oxide reacts spontaneously with NADH to produce FMN. Requires the flavin reductase RutF to regenerate FMN in vivo. The polypeptide is Pyrimidine monooxygenase RutA (Yersinia enterocolitica serotype O:8 / biotype 1B (strain NCTC 13174 / 8081)).